Here is a 377-residue protein sequence, read N- to C-terminus: UPF0754 membrane protein RBAM_010020 (377 aa).

A run of 2 helical transmembrane segments spans residues 1–21 and 357–377; these read MGIA…GAVT and YLGG…VILF.

This sequence belongs to the UPF0754 family.

The protein localises to the cell membrane. This Bacillus velezensis (strain DSM 23117 / BGSC 10A6 / LMG 26770 / FZB42) (Bacillus amyloliquefaciens subsp. plantarum) protein is UPF0754 membrane protein RBAM_010020.